The sequence spans 281 residues: Leukocyte antigen CD37 (281 aa).

Topologically, residues 1–17 (MSAQESCLSLIKYFLFV) are cytoplasmic. A helical membrane pass occupies residues 18 to 38 (FNLFFFVLGGLIFCFGTWILI). At 39-59 (DKTSFVSFVGLSFVPLQTWSK) the chain is on the extracellular side. The chain crosses the membrane as a helical span at residues 60–74 (VLAVSGVLTMALALL). The Cytoplasmic segment spans residues 75-85 (GCVGALKELRC). The helical transmembrane segment at 86-111 (LLGLYFGMLLLLFATQITLGILISTQ) threads the bilayer. Residues 112-241 (RVRLERRVQE…QSLQKWLHNN (130 aa)) are Extracellular-facing. Residues Asn-170, Asn-183, and Asn-188 are each glycosylated (N-linked (GlcNAc...) asparagine). Residues 242–266 (IISIVGICLGVGLLELGFMTLSIFL) form a helical membrane-spanning segment. Topologically, residues 267 to 281 (CRNLDHVYDRLARYR) are cytoplasmic.

This sequence belongs to the tetraspanin (TM4SF) family. As to quaternary structure, interacts with SCIMP. Interacts with SOCS3. Interacts with DECTIN1/CLEC7A. In terms of processing, tyrosine phosphorylated; leading to activation of downstream signaling pathways.

The protein resides in the cell membrane. Functionally, structural component of specialized membrane microdomains known as tetraspanin-enriched microdomains (TERMs), which act as platforms for receptor clustering and signaling. Participates thereby in diverse biological functions such as cell signal transduction, adhesion, migration and protein trafficking. Upon ligand binding, two signaling pathways are activated, one acting through phosphorylation by LYN leading to cell death or a survival pathway with activation of GSK3B. Plays an essential role for clustering of integrin ITGA4/ITGB1 and promotes its mobility in the plasma membrane of B-cells. In turn, participates in ITGA4/ITGB1 integrin-mediated antiapoptotic signaling through AKT. Also plays a role in the migration of dendritic cells and neutrophils to draining lymph nodes, as well as in their integrin-mediated adhesion. Negatively regulates IL-6 responses through direct interaction with SOCS3 thereby preventing constitutive IL-6 signaling. Alternatively, inhibition of IL-6 signaling can also occur via interaction and stabilization of DECTIN1/CLEC7A at the cell membrane to inhibit its ability to promote the production of IL-6. The polypeptide is Leukocyte antigen CD37 (Cd37) (Mus musculus (Mouse)).